Reading from the N-terminus, the 180-residue chain is Inner membrane-spanning protein YciB (180 aa).

5 helical membrane-spanning segments follow: residues 25-45, 54-74, 76-96, 118-138, and 150-170; these read QNAT…CYFV, IISV…GNSI, IKIK…MSGI, ITLS…NEIV, and FKVF…LPLL.

Belongs to the YciB family.

The protein resides in the cell inner membrane. In terms of biological role, plays a role in cell envelope biogenesis, maintenance of cell envelope integrity and membrane homeostasis. The protein is Inner membrane-spanning protein YciB of Rickettsia canadensis (strain McKiel).